The primary structure comprises 514 residues: Maturase K (514 aa).

The protein belongs to the intron maturase 2 family. MatK subfamily.

It is found in the plastid. It localises to the chloroplast. In terms of biological role, usually encoded in the trnK tRNA gene intron. Probably assists in splicing its own and other chloroplast group II introns. The polypeptide is Maturase K (Dioon spinulosum (Gum palm)).